The chain runs to 409 residues: Phosphatidylglycerol--prolipoprotein diacylglyceryl transferase (409 aa).

4 helical membrane passes run 18-38, 48-68, 93-113, and 119-139; these read PVPL…AVFV, MDPM…IVGA, IWNG…GAWL, and GISL…AQAI. Arg-141 lines the a 1,2-diacyl-sn-glycero-3-phospho-(1'-sn-glycerol) pocket. Helical transmembrane passes span 177-197 and 234-254; these read QPTF…LLVV and ILGL…ALLA. The interval 273–409 is disordered; that stretch reads ALGIARSRPA…AVPPEEPQLP (137 aa). Composition is skewed to low complexity over residues 297 to 309, 320 to 335, and 348 to 375; these read AAAP…DSAA, PDLG…SAGS, and TATT…TATT.

Belongs to the Lgt family.

The protein localises to the cell membrane. It catalyses the reaction L-cysteinyl-[prolipoprotein] + a 1,2-diacyl-sn-glycero-3-phospho-(1'-sn-glycerol) = an S-1,2-diacyl-sn-glyceryl-L-cysteinyl-[prolipoprotein] + sn-glycerol 1-phosphate + H(+). It participates in protein modification; lipoprotein biosynthesis (diacylglyceryl transfer). In terms of biological role, catalyzes the transfer of the diacylglyceryl group from phosphatidylglycerol to the sulfhydryl group of the N-terminal cysteine of a prolipoprotein, the first step in the formation of mature lipoproteins. The protein is Phosphatidylglycerol--prolipoprotein diacylglyceryl transferase of Frankia casuarinae (strain DSM 45818 / CECT 9043 / HFP020203 / CcI3).